The following is a 720-amino-acid chain: uncharacterized protein (720 aa).

A lipid anchor (N-myristoyl glycine; by host) is attached at Gly2.

This is an uncharacterized protein from Cryphonectria parasitica mycoreovirus 1 (strain 9B21) (CpMYRV-1).